The following is a 203-amino-acid chain: High frequency lysogenization protein HflD homolog (203 aa).

Belongs to the HflD family.

The protein localises to the cytoplasm. Its subcellular location is the cell inner membrane. The chain is High frequency lysogenization protein HflD homolog from Histophilus somni (strain 2336) (Haemophilus somnus).